The following is a 313-amino-acid chain: MGNELRHRTVLLDEAVESLVTRPDGVCVDGTFGRGGHSRAVLARLASAGRLIAFDKDPRAIETAQGIEDARFSIVHDSFASMRDALAARGVEKVSGVLLDLGVSSPQVDDPARGFSFRADGPLDMRMDPTRGESAAEWLARASVQELTEVIRDYGEERFAFQIAKALVARRAESDRLGPLDTTGELAQIVGHVVKTREKGKDPATRTFQAIRIHVNQELADLQVVLDAALSLLEQGGRLVVISFHSLEDRIVKRFMQAHASAPAVDRRLPIRAVDLPSPPLKIISRQFPSEAEVAANPRARSAVMRIAERVTP.

S-adenosyl-L-methionine is bound by residues G35 to H37, D55, F79, D100, and Q107.

The protein belongs to the methyltransferase superfamily. RsmH family.

Its subcellular location is the cytoplasm. It catalyses the reaction cytidine(1402) in 16S rRNA + S-adenosyl-L-methionine = N(4)-methylcytidine(1402) in 16S rRNA + S-adenosyl-L-homocysteine + H(+). Functionally, specifically methylates the N4 position of cytidine in position 1402 (C1402) of 16S rRNA. This is Ribosomal RNA small subunit methyltransferase H from Burkholderia orbicola (strain AU 1054).